The chain runs to 501 residues: Probable malate:quinone oxidoreductase (501 aa).

It belongs to the MQO family. Requires FAD as cofactor.

The enzyme catalyses (S)-malate + a quinone = a quinol + oxaloacetate. It participates in carbohydrate metabolism; tricarboxylic acid cycle; oxaloacetate from (S)-malate (quinone route): step 1/1. The polypeptide is Probable malate:quinone oxidoreductase (Paenarthrobacter aurescens (strain TC1)).